The chain runs to 2620 residues: Ankyrin repeat and KH domain-containing protein mask-1 (2620 aa).

12 ANK repeats span residues 254-283 (SKITPLMEAAASSSETIVRRLLELGADPNV), 288-318 (NCNTALIYAASTDGRDVVREILMTEGPKKPD), 361-390 (ERDSALTLSAQKGHIKIVTAIMDYYEKNPP), 402-431 (ERYSALMEAAMEGHIDVCKLMLSRGTPADL), 437-466 (IEPSPLIVASAGGYPEVVEVLLAAGAKIEE), 470-502 (KKNTPLMEACAGDQGDQAGVVKLLLSKHAEVDV), 507-536 (TGDTPLSLAARNGYIAIMKMLIEKGGDLTA), 538-566 (KTSPIVEAARNGHLECIQFILAHCKTIPQ), 568-597 (QLSRALVSAADFGSLLIVEEVIRAGADLNF), 600-629 (DERTALMKAAKGDHFEVVQLLLSKGASVNF), 634-663 (NDATALSLACSEGNMEIAEFLIRNGADPML), and 667-697 (DGVNCFMEVARHGSIDLMSLLVEFTKGNMPM). Disordered stretches follow at residues 699-726 (KDPPKLGITRCSSKNGKKRRKGMPSGQD), 994-1032 (HQEERFGPSKPIPSGPKKTSLTAPNPADTSDVTTKQPGA), and 1192-1229 (SLMAKSVQSQQQQGQLRRTHSEGDGAERAKSRSNAIDK). Residues 1012 to 1029 (TSLTAPNPADTSDVTTKQ) are compositionally biased toward polar residues. Residues 1192-1206 (SLMAKSVQSQQQQGQ) show a composition bias toward low complexity. The segment covering 1210–1221 (THSEGDGAERAK) has biased composition (basic and acidic residues). ANK repeat units lie at residues 1234–1263 (TLETPLTIACANGHKDIVELLLKEGANIEH), 1267–1296 (KGFSPLIIAATAGHSSVVEVLLKNHAAIEA), 1301–1330 (TKDTALSLACSGGRKDVVELLLAHGANKEH), 1334–1363 (SDYTPLSLASSGGYIEIVNMLLTAGSEINS), 1369–1398 (LGISPLMLASMNGHREATRVLLEKGSDINA), 1403–1432 (NRNTALTLASFQGRTEVVKLLLAYNANVEH), 1436–1465 (TGLTPLMECASGGYVDVGNLLIAAGADTNA), 1471–1500 (TKDTALTISAEKGHEKFVRMLLNGDAAVDV), 1504–1533 (KGCTALWLACNGGYLSTAQALLEKGADPDM), and 1537–1566 (RKISPMMAAFRKGHVEIVKYMVNSAKQFPN). Residues 1596–1648 (AKKAQAESAELAAQKLLELIDEEKVQKEVKKQKQKDKKIKKKEEKKIKKQEAE) adopt a coiled-coil conformation. 2 disordered regions span residues 1621 to 1720 (QKEV…AEEP) and 1759 to 1804 (KEGK…EIDT). Basic and acidic residues predominate over residues 1636 to 1647 (KKEEKKIKKQEA). Over residues 1648–1661 (EPEPEPEPEPEPVP) the composition is skewed to acidic residues. 2 stretches are compositionally biased toward low complexity: residues 1665 to 1681 (PVVISEPVPEPVPIVVE) and 1769 to 1791 (KSGYGAPSSAGSSQAKESSTTSS). The KH domain maps to 1807 to 1873 (ESSWKLTIPA…EMVRYAMNII (67 aa)). Residues 1899–1913 (ASSFSSEGTSKSAVD) show a composition bias toward polar residues. Disordered regions lie at residues 1899-1962 (ASSF…GNVW), 1976-2010 (LMETKRISQSPKQAPQIPSTQQQSKLQSRQDQASE), 2067-2143 (SVQS…QTQN), 2267-2294 (NATSSPQGASTISSAPVQQPSTSSVTTG), 2307-2343 (SFAPSARDPNRSQPPLFARSQSNSVANSTSTNIQQQQ), 2372-2391 (QHQSQSSQQPSDLMSSKFSM), 2429-2448 (QESSTGAPGPTSSQLANSYY), and 2496-2620 (QKKQ…SSNW). A compositionally biased stretch (low complexity) spans 1917-1946 (APSSIPKSLSSASIARQSASPIPQQSSQRS). Positions 1982–1993 (ISQSPKQAPQIP) are enriched in polar residues. 3 stretches are compositionally biased toward low complexity: residues 1994-2006 (STQQQSKLQSRQD), 2067-2078 (SVQSVQHMQQQQ), and 2100-2118 (SQPISRPQSSVQVSQSSFS). Polar residues-rich tracts occupy residues 2267–2286 (NATSSPQGASTISSAPVQQP) and 2325–2339 (RSQSNSVANSTSTNI). The span at 2505-2528 (SFMHNSQQPQPFGAPSNASANQSR) shows a compositional bias: polar residues. Residues 2535 to 2547 (RPQPPPFVAPQAP) show a composition bias toward pro residues. The span at 2552 to 2565 (SLGNASSTTNPSRT) shows a compositional bias: polar residues. Composition is skewed to low complexity over residues 2566–2588 (SMQQMYQQYGQSSQQQPYGQMPQ) and 2597–2620 (QQQQSASGQQNHQSSSSNKWSSNW).

The protein belongs to the mask family.

Its subcellular location is the cytoplasm. The protein is Ankyrin repeat and KH domain-containing protein mask-1 of Caenorhabditis elegans.